The sequence spans 628 residues: Chaperone protein HtpG (628 aa).

The a; substrate-binding stretch occupies residues 1 to 334; it reads MTTIDTASET…SEDLPLNLSR (334 aa). A b region spans residues 335 to 550; it reads EMLQNNPQLA…GFGPDRELEK (216 aa). Residues 551–628 form a c region; it reads MLARANKGAA…LVLRGVVAHG (78 aa).

This sequence belongs to the heat shock protein 90 family. In terms of assembly, homodimer.

It is found in the cytoplasm. Molecular chaperone. Has ATPase activity. The protein is Chaperone protein HtpG of Rhodopseudomonas palustris (strain HaA2).